A 130-amino-acid chain; its full sequence is Histone H2A type 1-F (130 aa).

Residues Met1–Ala22 form a disordered region. Ser2 is modified (phosphoserine; by RPS6KA5). The residue at position 4 (Arg4) is a Citrulline; alternate. Residue Arg4 is modified to Symmetric dimethylarginine; by PRMT5; alternate. Lys6 is subject to N6-(2-hydroxyisobutyryl)lysine; alternate. Lys6 is subject to N6-(beta-hydroxybutyryl)lysine; alternate. Residues Gln7 to Ser19 show a composition bias toward basic residues. Position 10 is an N6-(2-hydroxyisobutyryl)lysine (Lys10). Lys10 carries the N6-lactoyllysine; alternate modification. Lys37 bears the N6-(2-hydroxyisobutyryl)lysine; alternate mark. Lys37 is subject to N6-(beta-hydroxybutyryl)lysine; alternate. An N6-crotonyllysine; alternate modification is found at Lys37. Lys75, Lys76, and Lys96 each carry N6-(2-hydroxyisobutyryl)lysine. N6-glutaryllysine; alternate is present on Lys96. N5-methylglutamine is present on Gln105. At Lys119 the chain carries N6-(2-hydroxyisobutyryl)lysine; alternate. An N6-crotonyllysine; alternate mark is found at Lys119 and Lys120. Lys119 and Lys120 each carry N6-glutaryllysine; alternate. N6-(beta-hydroxybutyryl)lysine; alternate is present on Lys120. Lys120 participates in a covalent cross-link: Glycyl lysine isopeptide (Lys-Gly) (interchain with G-Cter in ubiquitin); alternate. Thr121 is subject to Phosphothreonine; by DCAF1. An N6-(beta-hydroxybutyryl)lysine; alternate modification is found at Lys126. Residue Lys126 is modified to N6-crotonyllysine; alternate. An N6-glutaryllysine; alternate modification is found at Lys126.

It belongs to the histone H2A family. As to quaternary structure, the nucleosome is a histone octamer containing two molecules each of H2A, H2B, H3 and H4 assembled in one H3-H4 heterotetramer and two H2A-H2B heterodimers. The octamer wraps approximately 147 bp of DNA. In terms of processing, deiminated on Arg-4 in granulocytes upon calcium entry. Post-translationally, monoubiquitination of Lys-120 (H2AK119Ub) by RING1, TRIM37 and RNF2/RING2 complex gives a specific tag for epigenetic transcriptional repression and participates in X chromosome inactivation of female mammals. It is involved in the initiation of both imprinted and random X inactivation. Ubiquitinated H2A is enriched in inactive X chromosome chromatin. Ubiquitination of H2A functions downstream of methylation of 'Lys-27' of histone H3 (H3K27me). H2AK119Ub by RNF2/RING2 can also be induced by ultraviolet and may be involved in DNA repair. Following DNA double-strand breaks (DSBs), it is ubiquitinated through 'Lys-63' linkage of ubiquitin moieties by the E2 ligase UBE2N and the E3 ligases RNF8 and RNF168, leading to the recruitment of repair proteins to sites of DNA damage. Ubiquitination at Lys-14 and Lys-16 (H2AK13Ub and H2AK15Ub, respectively) in response to DNA damage is initiated by RNF168 that mediates monoubiquitination at these 2 sites, and 'Lys-63'-linked ubiquitin are then conjugated to monoubiquitin; RNF8 is able to extend 'Lys-63'-linked ubiquitin chains in vitro. H2AK119Ub and ionizing radiation-induced 'Lys-63'-linked ubiquitination (H2AK13Ub and H2AK15Ub) are distinct events. Phosphorylation on Ser-2 (H2AS1ph) is enhanced during mitosis. Phosphorylation on Ser-2 by RPS6KA5/MSK1 directly represses transcription. Acetylation of H3 inhibits Ser-2 phosphorylation by RPS6KA5/MSK1. Phosphorylation at Thr-121 (H2AT120ph) by DCAF1 is present in the regulatory region of many tumor suppresor genes and down-regulates their transcription. In terms of processing, symmetric dimethylation on Arg-4 by the PRDM1/PRMT5 complex may play a crucial role in the germ-cell lineage. Post-translationally, glutamine methylation at Gln-105 (H2AQ104me) by FBL is specifically dedicated to polymerase I. It is present at 35S ribosomal DNA locus and impairs binding of the FACT complex. Crotonylation (Kcr) is specifically present in male germ cells and marks testis-specific genes in post-meiotic cells, including X-linked genes that escape sex chromosome inactivation in haploid cells. Crotonylation marks active promoters and enhancers and confers resistance to transcriptional repressors. It is also associated with post-meiotically activated genes on autosomes. In terms of processing, hydroxybutyrylation of histones is induced by starvation. Post-translationally, lactylated in macrophages by EP300/P300 by using lactoyl-CoA directly derived from endogenous or exogenous lactate, leading to stimulates gene transcription.

Its subcellular location is the nucleus. It localises to the chromosome. Core component of nucleosome. Nucleosomes wrap and compact DNA into chromatin, limiting DNA accessibility to the cellular machineries which require DNA as a template. Histones thereby play a central role in transcription regulation, DNA repair, DNA replication and chromosomal stability. DNA accessibility is regulated via a complex set of post-translational modifications of histones, also called histone code, and nucleosome remodeling. The chain is Histone H2A type 1-F (Hist1h2af) from Mus musculus (Mouse).